The following is a 303-amino-acid chain: Acetaldehyde dehydrogenase (303 aa).

The active-site Acyl-thioester intermediate is Cys-131. Residues 162–170 and Asn-273 contribute to the NAD(+) site; that span reads SVGPGTRAN.

This sequence belongs to the acetaldehyde dehydrogenase family.

The enzyme catalyses acetaldehyde + NAD(+) + CoA = acetyl-CoA + NADH + H(+). This is Acetaldehyde dehydrogenase from Marinomonas sp. (strain MWYL1).